The following is a 399-amino-acid chain: S-adenosylmethionine synthase (399 aa).

His15 contributes to the ATP binding site. Mg(2+) is bound at residue Asp17. A K(+)-binding site is contributed by Glu43. Glu56 and Gln99 together coordinate L-methionine. Residues 99-109 (QSPDIAGGVDH) are flexible loop. ATP contacts are provided by residues 175 to 177 (DAK), 242 to 243 (RF), Asp251, 257 to 258 (RK), Ala274, and Lys278. An L-methionine-binding site is contributed by Asp251. Lys282 provides a ligand contact to L-methionine.

The protein belongs to the AdoMet synthase family. In terms of assembly, homotetramer; dimer of dimers. Requires Mg(2+) as cofactor. The cofactor is K(+).

The protein resides in the cytoplasm. It catalyses the reaction L-methionine + ATP + H2O = S-adenosyl-L-methionine + phosphate + diphosphate. Its pathway is amino-acid biosynthesis; S-adenosyl-L-methionine biosynthesis; S-adenosyl-L-methionine from L-methionine: step 1/1. Functionally, catalyzes the formation of S-adenosylmethionine (AdoMet) from methionine and ATP. The overall synthetic reaction is composed of two sequential steps, AdoMet formation and the subsequent tripolyphosphate hydrolysis which occurs prior to release of AdoMet from the enzyme. This chain is S-adenosylmethionine synthase, found in Lactobacillus helveticus (strain DPC 4571).